The sequence spans 201 residues: Large ribosomal subunit protein uL4 (201 aa).

The tract at residues 43–69 is disordered; the sequence is TKAQKGRSDVSGGGAKPWKQKGSGRAR.

It belongs to the universal ribosomal protein uL4 family. As to quaternary structure, part of the 50S ribosomal subunit.

Its function is as follows. One of the primary rRNA binding proteins, this protein initially binds near the 5'-end of the 23S rRNA. It is important during the early stages of 50S assembly. It makes multiple contacts with different domains of the 23S rRNA in the assembled 50S subunit and ribosome. In terms of biological role, forms part of the polypeptide exit tunnel. This chain is Large ribosomal subunit protein uL4, found in Thioalkalivibrio sulfidiphilus (strain HL-EbGR7).